The chain runs to 734 residues: Photosystem I P700 chlorophyll a apoprotein A2 (734 aa).

8 helical membrane passes run 46–69 (IFAS…FHVA), 135–158 (LYTG…LHLE), 175–199 (LNHH…HVAI), 273–291 (IAHH…GHTY), 330–353 (LHFQ…QHMY), 369–395 (AALY…IFLT), 417–439 (AIIS…LYVH), and 517–535 (FPVH…LILS). Residues C559 and C568 each contribute to the [4Fe-4S] cluster site. Transmembrane regions (helical) follow at residues 575 to 596 (AFYP…HWHW) and 643 to 665 (LSVW…MFLI). The chlorophyll a site is built by H654, M662, and Y670. A phylloquinone-binding site is contributed by W671. Residues 707–727 (LVGLAHFSVGYIFTYAAFPIP) traverse the membrane as a helical segment.

This sequence belongs to the PsaA/PsaB family. As to quaternary structure, the PsaA/B heterodimer binds the P700 chlorophyll special pair and subsequent electron acceptors. PSI consists of a core antenna complex that captures photons, and an electron transfer chain that converts photonic excitation into a charge separation. The eukaryotic PSI reaction center is composed of at least 11 subunits. Requires P700 is a chlorophyll a/chlorophyll a' dimer, A0 is one or more chlorophyll a, A1 is one or both phylloquinones and FX is a shared 4Fe-4S iron-sulfur center. as cofactor.

Its subcellular location is the plastid. The protein resides in the chloroplast thylakoid membrane. It carries out the reaction reduced [plastocyanin] + hnu + oxidized [2Fe-2S]-[ferredoxin] = oxidized [plastocyanin] + reduced [2Fe-2S]-[ferredoxin]. Its function is as follows. PsaA and PsaB bind P700, the primary electron donor of photosystem I (PSI), as well as the electron acceptors A0, A1 and FX. PSI is a plastocyanin-ferredoxin oxidoreductase, converting photonic excitation into a charge separation, which transfers an electron from the donor P700 chlorophyll pair to the spectroscopically characterized acceptors A0, A1, FX, FA and FB in turn. Oxidized P700 is reduced on the lumenal side of the thylakoid membrane by plastocyanin. This chain is Photosystem I P700 chlorophyll a apoprotein A2, found in Selaginella uncinata (Blue spike-moss).